The chain runs to 199 residues: MKIGDVEVRDDVFNVKVKKHVLWEVVKWQLAKRRQGTHSTKTRGEVAYSGRKILPQKGTGNARHGERGVNIFVGGGVAHGPKPRDYEYPLPKKVRKLGLKMALSDKAQNDAIMFVDNIDLGEQPKTKKAVEFLKNLGVDKETLLIVIPEKNEVLYKSFRNLQNVRVLLPEGLNVYDVLWANKLVIHKECLDRIYKKVEA.

The protein belongs to the universal ribosomal protein uL4 family. As to quaternary structure, part of the 50S ribosomal subunit.

One of the primary rRNA binding proteins, this protein initially binds near the 5'-end of the 23S rRNA. It is important during the early stages of 50S assembly. It makes multiple contacts with different domains of the 23S rRNA in the assembled 50S subunit and ribosome. In terms of biological role, forms part of the polypeptide exit tunnel. The chain is Large ribosomal subunit protein uL4 from Aquifex pyrophilus.